The primary structure comprises 219 residues: Small ribosomal subunit protein uS3 (219 aa).

Residues 38–106 (VRKFVKTKLQ…QVAVNIVEVK (69 aa)) form the KH type-2 domain.

This sequence belongs to the universal ribosomal protein uS3 family. In terms of assembly, part of the 30S ribosomal subunit. Forms a tight complex with proteins S10 and S14.

Functionally, binds the lower part of the 30S subunit head. Binds mRNA in the 70S ribosome, positioning it for translation. This is Small ribosomal subunit protein uS3 from Desulfitobacterium hafniense (strain DSM 10664 / DCB-2).